The primary structure comprises 383 residues: Succinyl-diaminopimelate desuccinylase (383 aa).

Histidine 73 contributes to the Zn(2+) binding site. Residue aspartate 75 is part of the active site. Residue aspartate 107 coordinates Zn(2+). Catalysis depends on glutamate 141, which acts as the Proton acceptor. Zn(2+) contacts are provided by glutamate 142, glutamate 170, and histidine 356.

Belongs to the peptidase M20A family. DapE subfamily. In terms of assembly, homodimer. The cofactor is Zn(2+). Requires Co(2+) as cofactor.

It catalyses the reaction N-succinyl-(2S,6S)-2,6-diaminopimelate + H2O = (2S,6S)-2,6-diaminopimelate + succinate. Its pathway is amino-acid biosynthesis; L-lysine biosynthesis via DAP pathway; LL-2,6-diaminopimelate from (S)-tetrahydrodipicolinate (succinylase route): step 3/3. In terms of biological role, catalyzes the hydrolysis of N-succinyl-L,L-diaminopimelic acid (SDAP), forming succinate and LL-2,6-diaminopimelate (DAP), an intermediate involved in the bacterial biosynthesis of lysine and meso-diaminopimelic acid, an essential component of bacterial cell walls. This Pseudomonas paraeruginosa (strain DSM 24068 / PA7) (Pseudomonas aeruginosa (strain PA7)) protein is Succinyl-diaminopimelate desuccinylase.